The primary structure comprises 345 residues: Phosphoribosylformylglycinamidine cyclo-ligase (345 aa).

The protein belongs to the AIR synthase family.

It localises to the cytoplasm. It catalyses the reaction 2-formamido-N(1)-(5-O-phospho-beta-D-ribosyl)acetamidine + ATP = 5-amino-1-(5-phospho-beta-D-ribosyl)imidazole + ADP + phosphate + H(+). The protein operates within purine metabolism; IMP biosynthesis via de novo pathway; 5-amino-1-(5-phospho-D-ribosyl)imidazole from N(2)-formyl-N(1)-(5-phospho-D-ribosyl)glycinamide: step 2/2. The sequence is that of Phosphoribosylformylglycinamidine cyclo-ligase from Anaeromyxobacter dehalogenans (strain 2CP-C).